A 147-amino-acid polypeptide reads, in one-letter code: uncharacterized protein (147 aa).

The 104-residue stretch at 44 to 147 (LVGYIDKEIH…LKSIKERLSI (104 aa)) folds into the HTH LytTR-type domain.

The protein resides in the cytoplasm. This is an uncharacterized protein from Staphylococcus aureus (strain COL).